Reading from the N-terminus, the 235-residue chain is Caveolin-1 (235 aa).

Residues 1–161 (MSTEQDIKTE…LVSLLALPFT (161 aa)) lie on the Cytoplasmic side of the membrane. The disordered stretch occupies residues 29–72 (GEAVVAPEEPKPKKNWFTFGKKKAAPTDETNIEEGGAPGDEPVK). Residues 162–182 (IIFAIFFGLLASINVFIIVPL) constitute an intramembrane region (helical). The Cytoplasmic segment spans residues 183–235 (GKLLSIPGTLLAKLWNWLIHAIFDPIASAVGLIFSNFNIRKYGINQETTAPCV). Cysteine 234 is lipidated: S-palmitoyl cysteine.

It belongs to the caveolin family. Homooligomer containing 14-16 monomers per oligomer.

It is found in the golgi apparatus membrane. Its subcellular location is the cell membrane. The protein resides in the membrane. The protein localises to the caveola. Functionally, may act as a scaffolding protein within caveolar membranes. Interacts directly with G-protein alpha subunits and can functionally regulate their activity. This is Caveolin-1 (cav-1) from Caenorhabditis elegans.